The sequence spans 425 residues: Enolase (425 aa).

Gln162 lines the (2R)-2-phosphoglycerate pocket. The active-site Proton donor is the Glu204. Positions 241, 282, and 309 each coordinate Mg(2+). Positions 334, 363, 364, and 385 each coordinate (2R)-2-phosphoglycerate. Lys334 acts as the Proton acceptor in catalysis.

It belongs to the enolase family. Mg(2+) serves as cofactor.

Its subcellular location is the cytoplasm. It localises to the secreted. It is found in the cell surface. It carries out the reaction (2R)-2-phosphoglycerate = phosphoenolpyruvate + H2O. It participates in carbohydrate degradation; glycolysis; pyruvate from D-glyceraldehyde 3-phosphate: step 4/5. In terms of biological role, catalyzes the reversible conversion of 2-phosphoglycerate (2-PG) into phosphoenolpyruvate (PEP). It is essential for the degradation of carbohydrates via glycolysis. This Corynebacterium glutamicum (strain R) protein is Enolase.